The chain runs to 447 residues: Phosphoglucosamine mutase (447 aa).

The active-site Phosphoserine intermediate is Ser-100. The Mg(2+) site is built by Ser-100, Asp-239, Asp-241, and Asp-243. Ser-100 bears the Phosphoserine mark.

It belongs to the phosphohexose mutase family. Requires Mg(2+) as cofactor. Activated by phosphorylation.

It catalyses the reaction alpha-D-glucosamine 1-phosphate = D-glucosamine 6-phosphate. Its function is as follows. Catalyzes the conversion of glucosamine-6-phosphate to glucosamine-1-phosphate. In Thermoanaerobacter sp. (strain X514), this protein is Phosphoglucosamine mutase.